Consider the following 514-residue polypeptide: Embryonic protein UVS.2 (514 aa).

The first 19 residues, 1 to 19 (MDVKISAILLACIIQYAVS), serve as a signal peptide directing secretion. Positions 90-286 (SAINDARFLW…SKINKLYECN (197 aa)) constitute a Peptidase M12A domain. Residue asparagine 112 is glycosylated (N-linked (GlcNAc...) asparagine). 6 disulfide bridges follow: cysteine 137/cysteine 285, cysteine 158/cysteine 178, cysteine 288/cysteine 314, cysteine 340/cysteine 363, cysteine 402/cysteine 428, and cysteine 455/cysteine 475. A Zn(2+)-binding site is contributed by histidine 186. The active site involves glutamate 187. 2 residues coordinate Zn(2+): histidine 190 and histidine 196. Residue asparagine 199 is glycosylated (N-linked (GlcNAc...) asparagine). 2 consecutive CUB domains span residues 288–400 (CSNL…YGSI) and 402–513 (CGGA…YTFV). 3 N-linked (GlcNAc...) asparagine glycosylation sites follow: asparagine 421, asparagine 427, and asparagine 464.

It depends on Zn(2+) as a cofactor.

The sequence is that of Embryonic protein UVS.2 from Xenopus laevis (African clawed frog).